A 142-amino-acid chain; its full sequence is uncharacterized protein (142 aa).

Helical transmembrane passes span 75–97 (VFFR…YIVA) and 107–124 (LSIV…KLFY).

The protein localises to the cell membrane. This is an uncharacterized protein from Archaeoglobus fulgidus (strain ATCC 49558 / DSM 4304 / JCM 9628 / NBRC 100126 / VC-16).